A 287-amino-acid chain; its full sequence is Vesicle-associated protein 4-3 (287 aa).

Over residues 1–14 the composition is skewed to basic and acidic residues; that stretch reads MALTEDKSDSDGRR. Residues 1-45 form a disordered region; it reads MALTEDKSDSDGRRWGKFKLPFRNSNSQAPSASSSSSMATSSSSV. Residues 25-45 show a composition bias toward low complexity; that stretch reads SNSQAPSASSSSSMATSSSSV. The MSP domain maps to 99 to 221; the sequence is RLKLDPSAKL…EEQVMRVVFL (123 aa).

It belongs to the VAMP-associated protein (VAP) (TC 9.B.17) family.

Its function is as follows. May play a role in vesicle trafficking. This Arabidopsis thaliana (Mouse-ear cress) protein is Vesicle-associated protein 4-3 (PVA43).